The following is a 273-amino-acid chain: 3-keto-5-aminohexanoate cleavage enzyme (273 aa).

Position 14 (E14) interacts with (5S)-5-amino-3-oxohexanoate. Residues H46 and H48 each coordinate Zn(2+). (5S)-5-amino-3-oxohexanoate is bound by residues S82, G85, and S106. Position 227 (E227) interacts with Zn(2+).

It belongs to the BKACE family. Kce subfamily. As to quaternary structure, homotetramer. Requires Zn(2+) as cofactor.

It carries out the reaction (5S)-5-amino-3-oxohexanoate + acetyl-CoA = (3S)-3-aminobutanoyl-CoA + acetoacetate. It participates in amino-acid degradation; L-lysine degradation via acetate pathway. In terms of biological role, involved in the anaerobic fermentation of lysine. Catalyzes the reversible reaction between 3-keto-5-aminohexanoate (KAH) and acetyl-CoA to form 3-aminobutyryl-CoA and acetoacetate. The reaction involves the deprotonation of KAH, the nucleophilic addition onto acetyl-CoA and the intramolecular transfer of the CoA moiety. This chain is 3-keto-5-aminohexanoate cleavage enzyme, found in Acetoanaerobium sticklandii (strain ATCC 12662 / DSM 519 / JCM 1433 / CCUG 9281 / NCIMB 10654 / HF) (Clostridium sticklandii).